A 436-amino-acid chain; its full sequence is 3-ketoacyl-CoA thiolase (436 aa).

C99 functions as the Acyl-thioester intermediate in the catalytic mechanism. Catalysis depends on proton acceptor residues H392 and C422.

Belongs to the thiolase-like superfamily. Thiolase family. As to quaternary structure, heterotetramer of two alpha chains (FadJ) and two beta chains (FadI).

The protein resides in the cytoplasm. The enzyme catalyses an acyl-CoA + acetyl-CoA = a 3-oxoacyl-CoA + CoA. It functions in the pathway lipid metabolism; fatty acid beta-oxidation. Its function is as follows. Catalyzes the final step of fatty acid oxidation in which acetyl-CoA is released and the CoA ester of a fatty acid two carbons shorter is formed. The protein is 3-ketoacyl-CoA thiolase of Pseudoalteromonas atlantica (strain T6c / ATCC BAA-1087).